We begin with the raw amino-acid sequence, 259 residues long: Ras-related protein Rab-34 (259 aa).

Met-1 carries the post-translational modification N-acetylmethionine. Positions 62, 63, 64, 65, 66, 78, 81, and 84 each coordinate GTP. Residue Thr-66 coordinates Mg(2+). The short motif at 71–89 is the Switch 1 element; that stretch reads RFCKDTFDKNYKATIGVDF. Residues Thr-84 and Asp-107 each contribute to the Mg(2+) site. The Switch 2 signature appears at 108–127; it reads TAGQERFKCIASTYYRGAQA. Positions 110, 167, 169, and 198 each coordinate GTP. Residues Ser-241 and Ser-244 each carry the phosphoserine modification. S-geranylgeranyl cysteine attachment occurs at residues Cys-257 and Cys-258.

This sequence belongs to the small GTPase superfamily. Rab family. In terms of assembly, interacts with RILP. The GTP-bound form interacts with REP15. The cofactor is Mg(2+).

The protein localises to the cytoplasm. The protein resides in the golgi apparatus. Its subcellular location is the cytoplasmic vesicle. It localises to the phagosome. It is found in the phagosome membrane. The protein localises to the cell projection. The protein resides in the cilium. Its subcellular location is the cytoskeleton. It localises to the microtubule organizing center. It is found in the centrosome. The protein localises to the centriole. It catalyses the reaction GTP + H2O = GDP + phosphate + H(+). With respect to regulation, regulated by guanine nucleotide exchange factors (GEFs) which promote the exchange of bound GDP for free GTP. Regulated by GTPase activating proteins (GAPs) which increase the GTP hydrolysis activity. Inhibited by GDP dissociation inhibitors (GDIs). Functionally, the small GTPases Rab are key regulators of intracellular membrane trafficking, from the formation of transport vesicles to their fusion with membranes. Rabs cycle between an inactive GDP-bound form and an active GTP-bound form that is able to recruit to membranes different sets of downstream effectors directly responsible for vesicle formation, movement, tethering and fusion. RAB34 transports protein involved in the redistribution of lysosomes to the peri-Golgi region. Plays a role in the maturation of phagosomes that engulf pathogens, such as S.aureus and M.tuberculosis. Plays a role in the fusion of phagosomes with lysosomes. Required for the early steps of intracellular ciliogenesis, the cilium assembly pathway initiated by trafficking and docking of ciliary vesicles to the centrioles in the cytoplasm, followed by axoneme formation in the cytoplasm. After axoneme elongation, the centrioles migrate close to the cell surface so that ciliary vesicles can fuse with the plasma membrane to expose cilia to the extracellular space. It seems dispensable for ciliogenesis via the extracellular pathway where cilium assembly begins after migration and docking of the centriole to the plasma membrane. Also acts as a positive regulator of hedgehog signaling and regulates ciliary function. This chain is Ras-related protein Rab-34 (RAB34), found in Sus scrofa (Pig).